A 1747-amino-acid polypeptide reads, in one-letter code: MGGKTKQAPRTKNNAKPSSSSRTAELLGSSTPIFVGFSAQTDGGGLVPFAPGFASAEQMPDSFDAAISPQTQIILRKLSKKDPMTKKKALQELHELIEQSDVEVLKNILPLWPKYYLNLASDPEHTVREQTQTVLQLLMAKCKKAMAPYLKLLVPVWLGSRFDTYAPAASIASQSFRDTFAGNANRSREVCMHCQVEILEYATRNLTFHTAATLSIGKSLTPEDAEQKYQRVIISSLKLLSFFMGQTAQTEELSQVKEGFGTLVAHQKFWSFAKHKVPAIKAAWFECIYHILQSVALLDVITPQKTQLTNLCFQFIDDADPVVAPHIWGCVLLLQSNYVDWFVPLNIRKTLLPKLSSLLQNGFNRNAQAICPNLLPFLSKVTQASLQDLDIYDFYQRFFDDMKLAVTKKFDPPLSKSDCIVIHNAYFECLRFLMQQINNNKQREQKEEEFSFSLLDNNVLEPIAWLLKSDSTHVKIFFQHSSALVAFWDRQINNRLDNGDLYAKLLNKFWIRIFELVTQDLSAEEVNEQLLGHVLLLVQDLHMANPSLESPSVKFVEGPNEKIEKSEPTTPVKKAQEAAAFIQKELKQLVIKLVRICLDKANKGSGSGTSSSRYIEQIRTLTKMFNDAAFYKSLTDDGDLASALNKFVSLLGQLSCQACESVVEIVFEILPLLETGKRFEYIENTLMKLPQHGVQNLLLHRLLSYPLCAEAAVRQMLSGPETCEMIARIAEEVVVDNDREKLNLLHKCFFQTDTGDILINAKTVDKILLSMCGPLEQPVVDDAVEVCGSFIAQIMPVICSNNNSSLHVRQHIFLKLFKFSLEHRPEDYLSEDTLWEITTCWQDGLSSKDIEIDDDMLKCCAGIVEELANSAELKADTLDGMAEAMAKFVICSTENIEDEYKRLERIDETLTALLETPLKTTDKVQQFENHCVLLEALHGSVTAGVPFENACLSRNEILPLLQRSTLNFSTIYKLVYQFPPPQDTNDPEDELTEDYCDPNADVLKKWNEPLIAELLQCIRVAGTAECWLEMSVLQSSTEELVLILSEKVQSFMGNSSDLVAIVKERLQQAAVQQSSVIDCRLLSYLRFCPQYAAFEESASILLHEDLSENLVTQGALKTYVIALQFLLPKLSQKAITLSSAIMGTEPPEIWVKAAVFHALLLNNFEGDVNEQTDRNIIVSAVQFMTSIGERQASQKDLLHYNVEIQRQPYESVINTVEFIKLLTEVLKRFPYELSIKNWDAIRIGLSSWVLSVSKSIAQYQDPKTSLFIVAVYELFAALIDFIRSEKQKSSTELLKNMIDEWDSLFAKEVNLVLFKSYYLLTHEVSVDPGFQACYEALLEQITPVIERLDYSFVYSFCKSNSNITLDHLCNFLFKQLYSVQHSVRLSAVHSLRQLTPHFVADDIELNEKQSESLDASTTICKWHFLNRFEDYLTRYDALITKYLEEFTFKLSELDDLEPIDRHNALSYLFLWDCIINACAKSPVALRAVYTNWLNDNKYEENFLHFLFRAMPVDILKNHGAKVHSNGVYKELTWSQQKDRHLPLERYACHLYTEVLRKLPAVVRRWWNATQSRQKNFIDNLTTNYVSSLICSEELKAIANRKEKHENMQVTVHSSTREVLAVYAIDEARMELVITLAPNYPLGAVKVECGKQIGGRASSRNVGMQLTIFLTHQNGTIYDGLTMWKNNLDKKFEGVEECYVCYTVIHQETCQLPKLTCKTCKKKFHGPCLYKWFTTSSKSTCPICRNVF.

A disordered region spans residues 1–24 (MGGKTKQAPRTKNNAKPSSSSRTA). The span at 8–24 (APRTKNNAKPSSSSRTA) shows a compositional bias: polar residues. HEAT repeat units lie at residues 65-102 (AAISPQTQIILRKLSKKDPMTKKKALQELHELIEQSDV), 106-144 (KNILPLWPKYYLNLASDPEHTVREQTQTVLQLLMAKCKK), 346-383 (NIRKTLLPKLSSLLQNGFNRNAQAICPNLLPFLSKVTQ), 424-461 (NAYFECLRFLMQQINNNKQREQKEEEFSFSLLDNNVLE), and 508-547 (KFWIRIFELVTQDLSAEEVNEQLLGHVLLLVQDLHMANPS). A Phosphoserine modification is found at S566. 12 HEAT repeats span residues 612-653 (SRYI…LLGQ), 664-711 (EIVF…CAEA), 789-825 (SFIAQIMPVICSNNNSSLHVRQHIFLKLFKFSLEHRP), 952-989 (LSRNEILPLLQRSTLNFSTIYKLVYQFPPPQDTNDPED), 1005-1042 (KWNEPLIAELLQCIRVAGTAECWLEMSVLQSSTEELVL), 1053-1090 (GNSSDLVAIVKERLQQAAVQQSSVIDCRLLSYLRFCPQ), 1129-1166 (KLSQKAITLSSAIMGTEPPEIWVKAAVFHALLLNNFEG), 1216-1258 (VEFI…SIAQ), 1269-1307 (VAVYELFAALIDFIRSEKQKSSTELLKNMIDEWDSLFAK), 1330-1363 (FQACYEALLEQITPVIERLDYSFVYSFCKSNSNI), 1364-1400 (TLDHLCNFLFKQLYSVQHSVRLSAVHSLRQLTPHFVA), and 1500-1539 (ENFLHFLFRAMPVDILKNHGAKVHSNGVYKELTWSQQKDR). The RING-type zinc finger occupies 1697-1744 (CYVCYTVIHQETCQLPKLTCKTCKKKFHGPCLYKWFTTSSKSTCPICR).

This sequence belongs to the LTN1 family. Component of the ribosome quality control complex (RQC), composed of at least the E3 ubiquitin ligase l(3)76BDr/LTN1 and Clbn/NEMF. The complex probably also contains TCF25 as well as TER94/VCP and its ubiquitin-binding cofactors. RQC forms a stable complex with 60S ribosomal subunits.

The protein localises to the cytoplasm. Its subcellular location is the cytosol. The enzyme catalyses S-ubiquitinyl-[E2 ubiquitin-conjugating enzyme]-L-cysteine + [acceptor protein]-L-lysine = [E2 ubiquitin-conjugating enzyme]-L-cysteine + N(6)-ubiquitinyl-[acceptor protein]-L-lysine.. It functions in the pathway protein modification; protein ubiquitination. Its function is as follows. E3 ubiquitin-protein ligase component of the ribosome quality control complex (RQC), a ribosome-associated complex that mediates ubiquitination and extraction of incompletely synthesized nascent chains for proteasomal degradation. Ubiquitination leads to TER94/VCP recruitment for extraction and degradation of the incomplete translation product. This chain is E3 ubiquitin-protein ligase listerin, found in Drosophila melanogaster (Fruit fly).